A 417-amino-acid polypeptide reads, in one-letter code: Peptidyl-Asp metalloendopeptidase (417 aa).

A signal peptide spans 1-25 (MLSRSIGKAAGGLVLGLSVAAAAHA). His327 is a binding site for Zn(2+). Residue Glu328 is part of the active site. 2 residues coordinate Zn(2+): His331 and His337.

This sequence belongs to the peptidase M72 family. It depends on Zn(2+) as a cofactor.

The enzyme catalyses Cleavage of Xaa-|-Asp, Xaa-|-Glu and Xaa-|-cysteic acid bonds.. Metalloprotease, specifically cleaves on the N-terminal side of aspartyl, glutamyl and cysteic acid residues. The protein is Peptidyl-Asp metalloendopeptidase of Stenotrophomonas maltophilia (strain R551-3).